The sequence spans 413 residues: MLIRSASIIRNGSLLKNIDILIEGNRISEVGRDLRPNDDEIIDARNMLAVPGLVNSHTHLAMTLLRGYADDMELIPWLQEKIWPLEARLKPSDVRAGVKLGCLELIRFGVTCYNDMYYFMDETAAATREMGIRGVLSGVLFDMRPEFINDVEPFIKKWRDDDLIKPAVGPHAVYTCSEETLLRAKDIAERYDVKIHIHLSETRDEVDTFVNQRHMSPVEYLENLGFLSERVVAAHCVWLTPRDIRILAERHVNVAHCPISNLKLASGIAPVATLIEHGVNVCLGTDGASSNNNLDIFEEMKVAAVVQKCSVGRSAILPADAVWRMATENAYKAFSLDMGIRRGALADLALINMRRPWFIPVTSMISHLVYSMSGEASYTICNGRVLMRDGVIEGEAKILDEAQRCYERLISEE.

Positions 57 and 59 each coordinate Zn(2+). Positions 86 and 171 each coordinate substrate. H198 serves as a coordination point for Zn(2+). The substrate site is built by E201 and D286. A Zn(2+)-binding site is contributed by D286.

This sequence belongs to the metallo-dependent hydrolases superfamily. MTA/SAH deaminase family. In terms of assembly, homotetramer. Zn(2+) is required as a cofactor.

The catalysed reaction is 5'-deoxyadenosine + H2O + H(+) = 5'-deoxyinosine + NH4(+). It carries out the reaction S-adenosyl-L-homocysteine + H2O + H(+) = S-inosyl-L-homocysteine + NH4(+). The enzyme catalyses S-methyl-5'-thioadenosine + H2O + H(+) = S-methyl-5'-thioinosine + NH4(+). It catalyses the reaction adenosine + H2O + H(+) = inosine + NH4(+). It functions in the pathway amino-acid biosynthesis; S-adenosyl-L-methionine biosynthesis. Functionally, catalyzes the deamination of three SAM-derived enzymatic products, namely 5'-deoxyadenosine, S-adenosyl-L-homocysteine, and 5'-methylthioadenosine, to produce the inosine analogs. Can also deaminate adenosine. The preferred substrate for this enzyme is 5'-deoxyadenosine, but all these substrates are efficiently deaminated. Likely functions in a S-adenosyl-L-methionine (SAM) recycling pathway from S-adenosyl-L-homocysteine (SAH) produced from SAM-dependent methylation reactions. May also be involved in the recycling of 5'-deoxyadenosine, whereupon the 5'-deoxyribose moiety of 5'-deoxyinosine is further metabolized to deoxyhexoses used for the biosynthesis of aromatic amino acids in methanogens. The chain is 5'-deoxyadenosine deaminase from Methanothrix thermoacetophila (strain DSM 6194 / JCM 14653 / NBRC 101360 / PT) (Methanosaeta thermophila).